The primary structure comprises 315 residues: Methionyl-tRNA formyltransferase (315 aa).

A (6S)-5,6,7,8-tetrahydrofolate-binding site is contributed by 113 to 116; that stretch reads SLLP.

Belongs to the Fmt family.

It catalyses the reaction L-methionyl-tRNA(fMet) + (6R)-10-formyltetrahydrofolate = N-formyl-L-methionyl-tRNA(fMet) + (6S)-5,6,7,8-tetrahydrofolate + H(+). Attaches a formyl group to the free amino group of methionyl-tRNA(fMet). The formyl group appears to play a dual role in the initiator identity of N-formylmethionyl-tRNA by promoting its recognition by IF2 and preventing the misappropriation of this tRNA by the elongation apparatus. This is Methionyl-tRNA formyltransferase from Shigella boydii serotype 4 (strain Sb227).